The primary structure comprises 426 residues: 3-phosphoshikimate 1-carboxyvinyltransferase (426 aa).

3-phosphoshikimate contacts are provided by K22, S23, and R27. K22 is a phosphoenolpyruvate binding site. G96 and R124 together coordinate phosphoenolpyruvate. The 3-phosphoshikimate site is built by S170, S171, Q172, S198, D314, N337, and K341. Phosphoenolpyruvate is bound at residue Q172. D314 functions as the Proton acceptor in the catalytic mechanism. Positions 345, 387, and 412 each coordinate phosphoenolpyruvate.

This sequence belongs to the EPSP synthase family. Monomer.

It localises to the cytoplasm. It carries out the reaction 3-phosphoshikimate + phosphoenolpyruvate = 5-O-(1-carboxyvinyl)-3-phosphoshikimate + phosphate. It participates in metabolic intermediate biosynthesis; chorismate biosynthesis; chorismate from D-erythrose 4-phosphate and phosphoenolpyruvate: step 6/7. Functionally, catalyzes the transfer of the enolpyruvyl moiety of phosphoenolpyruvate (PEP) to the 5-hydroxyl of shikimate-3-phosphate (S3P) to produce enolpyruvyl shikimate-3-phosphate and inorganic phosphate. The sequence is that of 3-phosphoshikimate 1-carboxyvinyltransferase from Shewanella sp. (strain W3-18-1).